The sequence spans 185 residues: Ribosome-recycling factor (185 aa).

The protein belongs to the RRF family.

The protein resides in the cytoplasm. In terms of biological role, responsible for the release of ribosomes from messenger RNA at the termination of protein biosynthesis. May increase the efficiency of translation by recycling ribosomes from one round of translation to another. The chain is Ribosome-recycling factor from Pseudomonas savastanoi pv. phaseolicola (strain 1448A / Race 6) (Pseudomonas syringae pv. phaseolicola (strain 1448A / Race 6)).